Consider the following 356-residue polypeptide: Alanine racemase, catabolic (356 aa).

Lys35 acts as the Proton acceptor; specific for D-alanine in catalysis. Lys35 is modified (N6-(pyridoxal phosphate)lysine). Position 130 (Arg130) interacts with substrate. Tyr253 functions as the Proton acceptor; specific for L-alanine in the catalytic mechanism. Residue Met301 participates in substrate binding.

This sequence belongs to the alanine racemase family. Requires pyridoxal 5'-phosphate as cofactor.

The catalysed reaction is L-alanine = D-alanine. In terms of biological role, isomerizes L-alanine to D-alanine which is then oxidized to pyruvate by DadA. The chain is Alanine racemase, catabolic (dadX) from Escherichia coli O157:H7.